Consider the following 1210-residue polypeptide: V-type proton ATPase 116 kDa subunit a 4 (1210 aa).

The Cytoplasmic portion of the chain corresponds to 1–715 (MSSFSNVGFV…YTIITFPFLF (715 aa)). The span at 259-271 (SSKISFTSSSPSP) shows a compositional bias: low complexity. Residues 259 to 292 (SSKISFTSSSPSPQRNPKNEAQKNSSSKREETSM) are disordered. A compositionally biased stretch (basic and acidic residues) spans 275–291 (PKNEAQKNSSSKREETS). Positions 339 to 405 (FVKQMRRCEE…EREFLDLNNN (67 aa)) form a coiled coil. A helical membrane pass occupies residues 716–736 (AVMFGDAAHGAILLLAALFFI). The Extracellular segment spans residues 737-760 (RNERKIESKKIRDEIFNTFYGGRY). The helical transmembrane segment at 761–781 (IMMLMGIFSIYTGFLYNDAFA) threads the bilayer. Residues 782–855 (KSFNVFGSGW…SFLNSMKMKA (74 aa)) lie on the Cytoplasmic side of the membrane. A helical transmembrane segment spans residues 856–876 (SVIIGITQMTFGVFLSVLNHI). The Extracellular portion of the chain corresponds to 877 to 892 (HFKSYIDIISNFIPQV). A helical membrane pass occupies residues 893 to 913 (IFLSCIFIYLCIQIIVKWIFF). Topologically, residues 914–976 (SVNAENVFGF…WYPNQRLVET (63 aa)) are cytoplasmic. A helical membrane pass occupies residues 977-997 (ILISISLACIPIMLFGKPLWV). Over 998–1127 (RFVTSKRHKL…NETIAMCLKP (130 aa)) the chain is Extracellular. Residues asparagine 1010, asparagine 1019, and asparagine 1118 are each glycosylated (N-linked (GlcNAc...) asparagine). A helical membrane pass occupies residues 1128-1148 (VVACVAFFIFASLSLSILIMM). At 1149–1210 (EGLSAFLHAL…DISSGQHLHI (62 aa)) the chain is on the cytoplasmic side.

Belongs to the V-ATPase 116 kDa subunit family. As to quaternary structure, V-ATPase is a heteromultimeric enzyme made up of two complexes: the ATP-hydrolytic V1 complex and the proton translocation V0 complex. The V1 complex consists of three catalytic AB heterodimers that form a heterohexamer, three peripheral stalks each consisting of EG heterodimers, one central rotor including subunits D and F, and the regulatory subunits C and H. The proton translocation complex V0 consists of the proton transport subunit a, a ring of proteolipid subunits c9c'', rotary subunit d, subunits e and f, and the accessory subunits vah-19/Ac45 and vah-20/PRR. In terms of tissue distribution, expressed in uterus.

It localises to the membrane. Functionally, subunit of the V0 complex of vacuolar(H+)-ATPase (V-ATPase), a multisubunit enzyme composed of a peripheral complex (V1) that hydrolyzes ATP and a membrane integral complex (V0) that translocates protons. V-ATPase is responsible for acidifying and maintaining the pH of intracellular compartments and in some cell types, is targeted to the plasma membrane, where it is responsible for acidifying the extracellular environment. This Caenorhabditis elegans protein is V-type proton ATPase 116 kDa subunit a 4.